The primary structure comprises 183 residues: uncharacterized protein (183 aa).

In terms of domain architecture, SIS spans 27–170 (MIKLIDSARS…VAEIMMQKHL (144 aa)).

The protein belongs to the SIS family. PHI subfamily.

This is an uncharacterized protein from Archaeoglobus fulgidus (strain ATCC 49558 / DSM 4304 / JCM 9628 / NBRC 100126 / VC-16).